Consider the following 426-residue polypeptide: Mitogen-activated protein kinase 8 (426 aa).

Positions 26–321 (YQNLKPIGSG…VDDALQHPYI (296 aa)) constitute a Protein kinase domain. Residues 33–38 (GSGAQG) and Lys-55 contribute to the ATP site. The active-site Proton acceptor is the Asp-151. Thr-183 bears the Phosphothreonine mark. The TXY signature appears at 183–185 (TPY). Tyr-185 carries the post-translational modification Phosphotyrosine. A disordered region spans residues 375–426 (QPAPLGAAVTDGSQAHTSSSSGDASSMSTDPTLPSDTDSSLETSAGTLGCCR). The segment covering 384 to 404 (TDGSQAHTSSSSGDASSMSTD) has biased composition (low complexity). Residues 405 to 420 (PTLPSDTDSSLETSAG) are compositionally biased toward polar residues.

The protein belongs to the protein kinase superfamily. CMGC Ser/Thr protein kinase family. MAP kinase subfamily. Mg(2+) serves as cofactor. Dually phosphorylated on Thr-183 and Tyr-185, which activates the enzyme. As to expression, strongly expressed in presumptive ectoderm and mesoderm regions and weakly expressed in endoderm regions during early stages of embryo development. Expressed in the head and dorsal regions during neurula and tailbud stages.

The protein localises to the cytoplasm. The protein resides in the nucleus. It is found in the synapse. The catalysed reaction is L-seryl-[protein] + ATP = O-phospho-L-seryl-[protein] + ADP + H(+). It carries out the reaction L-threonyl-[protein] + ATP = O-phospho-L-threonyl-[protein] + ADP + H(+). Activated by threonine and tyrosine phosphorylation, potentially by the dual-specificity kinase, MKK7. Indirectly activated by Wnt5a. Functionally, responds to activation by environmental stress and pro-inflammatory cytokines by phosphorylating a number of transcription factors, and thus regulating transcriptional activity. Regulates morphogenic cell movements, controlling convergent extension during gastrulation. May play a role in the regulation of the circadian clock. The polypeptide is Mitogen-activated protein kinase 8 (mapk8) (Xenopus laevis (African clawed frog)).